Reading from the N-terminus, the 178-residue chain is MKQLLDFLPLVVFFVVYKMYDIFYASGALIAATGLAVAMTYFIYRKVEKASLITFIMVAVFGTLTLAFHSDLFIKWKVTVIYALFALALLGSQWFMKKPLIQKMLGKELILPDLVWNKLNMAWALFFTACALANIYVAFWLPQDVWVNFKVFGLTALTLVFTVLSVVYIYRHLPREQK.

The next 5 helical transmembrane spans lie at 22-42 (IFYA…MTYF), 50-70 (ASLI…AFHS), 72-92 (LFIK…LLGS), 121-141 (MAWA…AFWL), and 149-169 (FKVF…VVYI).

The protein belongs to the YciB family.

It is found in the cell inner membrane. Plays a role in cell envelope biogenesis, maintenance of cell envelope integrity and membrane homeostasis. The protein is Inner membrane-spanning protein YciB of Photorhabdus laumondii subsp. laumondii (strain DSM 15139 / CIP 105565 / TT01) (Photorhabdus luminescens subsp. laumondii).